The primary structure comprises 347 residues: Phosphate acyltransferase (347 aa).

This sequence belongs to the PlsX family. In terms of assembly, homodimer. Probably interacts with PlsY.

The protein localises to the cytoplasm. The enzyme catalyses a fatty acyl-[ACP] + phosphate = an acyl phosphate + holo-[ACP]. The protein operates within lipid metabolism; phospholipid metabolism. Its function is as follows. Catalyzes the reversible formation of acyl-phosphate (acyl-PO(4)) from acyl-[acyl-carrier-protein] (acyl-ACP). This enzyme utilizes acyl-ACP as fatty acyl donor, but not acyl-CoA. This Lawsonia intracellularis (strain PHE/MN1-00) protein is Phosphate acyltransferase.